The sequence spans 225 residues: Ribonuclease 3 (225 aa).

In terms of domain architecture, RNase III spans 7 to 129 (LPRLGRILGY…IIGAIYLDAD (123 aa)). E42 lines the Mg(2+) pocket. Residue D46 is part of the active site. 2 residues coordinate Mg(2+): D115 and E118. Residue E118 is part of the active site. The region spanning 155-225 (DPKTLLQEHL…AAEVLERIKK (71 aa)) is the DRBM domain.

It belongs to the ribonuclease III family. In terms of assembly, homodimer. The cofactor is Mg(2+).

The protein localises to the cytoplasm. It carries out the reaction Endonucleolytic cleavage to 5'-phosphomonoester.. Its function is as follows. Digests double-stranded RNA. Involved in the processing of primary rRNA transcript to yield the immediate precursors to the large and small rRNAs (23S and 16S). Processes some mRNAs, and tRNAs when they are encoded in the rRNA operon. Processes pre-crRNA and tracrRNA of type II CRISPR loci if present in the organism. The sequence is that of Ribonuclease 3 from Shewanella loihica (strain ATCC BAA-1088 / PV-4).